Reading from the N-terminus, the 388-residue chain is MEELREAFEEGKPVILIDRNRENEADFVFPAQLITEDVVSFFVTYGKGLFCVTADEEDLLKRGFVKLSSNYGANYFVPVDWGTGTGISALERAETCRKLAEGRYFHEFRYPGHVTVIGGIGFQRRKGHTEASLEISELAGFSRHAVIVEILDEKGNSHNLDYVLKLSEKFSLPVLEMDDVWREFVKRKLLMKKKAEATLPTDFGVFKVVSFENHLDGKEHFAIVKEPLEDPVAVRIHSECVTGDVLSSLRCDCGSQLANFLRYMSAHGGILIYLRQEGRGIGLSNKIAAYSLQDKGLDTVEANRVLGFSEDERDYAPAAQILKALGIERVLLFTNNQRKTVGLEKYGIEVVETKRLYGRVTPHNRFYLSTKMKKLGHELEEIFREVNS.

The DHBP synthase stretch occupies residues 1–186 (MEELREAFEE…MDDVWREFVK (186 aa)). D-ribulose 5-phosphate contacts are provided by residues 21–22 (RE), aspartate 26, 125–129 (RKGHT), and glutamate 149. A Mg(2+)-binding site is contributed by glutamate 22. Residue histidine 128 coordinates Mg(2+). Positions 187–388 (RKLLMKKKAE…LEEIFREVNS (202 aa)) are GTP cyclohydrolase II. Position 235–239 (235–239 (RIHSE)) interacts with GTP. Zn(2+) is bound by residues cysteine 240, cysteine 251, and cysteine 253. GTP contacts are provided by residues glutamine 256, 277–279 (EGR), and threonine 299. Residue aspartate 311 is the Proton acceptor; for GTP cyclohydrolase activity of the active site. Catalysis depends on arginine 313, which acts as the Nucleophile; for GTP cyclohydrolase activity. Residues threonine 334 and lysine 339 each coordinate GTP.

The protein in the N-terminal section; belongs to the DHBP synthase family. It in the C-terminal section; belongs to the GTP cyclohydrolase II family. Requires Mg(2+) as cofactor. It depends on Mn(2+) as a cofactor. Zn(2+) serves as cofactor.

It carries out the reaction D-ribulose 5-phosphate = (2S)-2-hydroxy-3-oxobutyl phosphate + formate + H(+). The enzyme catalyses GTP + 4 H2O = 2,5-diamino-6-hydroxy-4-(5-phosphoribosylamino)-pyrimidine + formate + 2 phosphate + 3 H(+). It participates in cofactor biosynthesis; riboflavin biosynthesis; 2-hydroxy-3-oxobutyl phosphate from D-ribulose 5-phosphate: step 1/1. The protein operates within cofactor biosynthesis; riboflavin biosynthesis; 5-amino-6-(D-ribitylamino)uracil from GTP: step 1/4. Functionally, catalyzes the conversion of D-ribulose 5-phosphate to formate and 3,4-dihydroxy-2-butanone 4-phosphate. Catalyzes the conversion of GTP to 2,5-diamino-6-ribosylamino-4(3H)-pyrimidinone 5'-phosphate (DARP), formate and pyrophosphate. In Thermotoga maritima (strain ATCC 43589 / DSM 3109 / JCM 10099 / NBRC 100826 / MSB8), this protein is Riboflavin biosynthesis protein RibBA.